Consider the following 216-residue polypeptide: MOB kinase activator 3C (216 aa).

Zn(2+) is bound by residues Cys82, Cys87, His164, and His169.

Belongs to the MOB1/phocein family.

Its function is as follows. May regulate the activity of kinases. The polypeptide is MOB kinase activator 3C (MOB3C) (Homo sapiens (Human)).